The primary structure comprises 232 residues: Flagellar L-ring protein (232 aa).

The N-terminal stretch at 1–21 (MQKNAAHTYAISSLLVLSLTG) is a signal peptide. Cys22 carries N-palmitoyl cysteine lipidation. Residue Cys22 is the site of S-diacylglycerol cysteine attachment.

This sequence belongs to the FlgH family. As to quaternary structure, the basal body constitutes a major portion of the flagellar organelle and consists of four rings (L,P,S, and M) mounted on a central rod.

It localises to the cell outer membrane. The protein localises to the bacterial flagellum basal body. Its function is as follows. Assembles around the rod to form the L-ring and probably protects the motor/basal body from shearing forces during rotation. The sequence is that of Flagellar L-ring protein from Shigella boydii serotype 18 (strain CDC 3083-94 / BS512).